We begin with the raw amino-acid sequence, 306 residues long: Proteasome subunit beta (306 aa).

Positions 1–67 (MTWPNRDQPA…GLPTDAVPHG (67 aa)) are cleaved as a propeptide — removed in mature form; by autocatalysis. The active-site Nucleophile is the T68.

This sequence belongs to the peptidase T1B family. The 20S proteasome core is composed of 14 alpha and 14 beta subunits that assemble into four stacked heptameric rings, resulting in a barrel-shaped structure. The two inner rings, each composed of seven catalytic beta subunits, are sandwiched by two outer rings, each composed of seven alpha subunits. The catalytic chamber with the active sites is on the inside of the barrel. Has a gated structure, the ends of the cylinder being occluded by the N-termini of the alpha-subunits. Is capped by the proteasome-associated ATPase, ARC.

It is found in the cytoplasm. The enzyme catalyses Cleavage of peptide bonds with very broad specificity.. Its pathway is protein degradation; proteasomal Pup-dependent pathway. Its activity is regulated as follows. The formation of the proteasomal ATPase ARC-20S proteasome complex, likely via the docking of the C-termini of ARC into the intersubunit pockets in the alpha-rings, may trigger opening of the gate for substrate entry. Interconversion between the open-gate and close-gate conformations leads to a dynamic regulation of the 20S proteasome proteolysis activity. In terms of biological role, component of the proteasome core, a large protease complex with broad specificity involved in protein degradation. The polypeptide is Proteasome subunit beta (Mycolicibacterium vanbaalenii (strain DSM 7251 / JCM 13017 / BCRC 16820 / KCTC 9966 / NRRL B-24157 / PYR-1) (Mycobacterium vanbaalenii)).